The primary structure comprises 526 residues: Glucose-6-phosphate isomerase (526 aa).

Catalysis depends on Glu343, which acts as the Proton donor. Residues His374 and Lys494 contribute to the active site.

The protein belongs to the GPI family.

The protein resides in the cytoplasm. It carries out the reaction alpha-D-glucose 6-phosphate = beta-D-fructose 6-phosphate. Its pathway is carbohydrate biosynthesis; gluconeogenesis. It functions in the pathway carbohydrate degradation; glycolysis; D-glyceraldehyde 3-phosphate and glycerone phosphate from D-glucose: step 2/4. Its function is as follows. Catalyzes the reversible isomerization of glucose-6-phosphate to fructose-6-phosphate. This chain is Glucose-6-phosphate isomerase, found in Dechloromonas aromatica (strain RCB).